Consider the following 142-residue polypeptide: Large ribosomal subunit protein uL13 (142 aa).

This sequence belongs to the universal ribosomal protein uL13 family. Part of the 50S ribosomal subunit.

Functionally, this protein is one of the early assembly proteins of the 50S ribosomal subunit, although it is not seen to bind rRNA by itself. It is important during the early stages of 50S assembly. This is Large ribosomal subunit protein uL13 from Xanthomonas oryzae pv. oryzae (strain MAFF 311018).